A 98-amino-acid polypeptide reads, in one-letter code: Large ribosomal subunit protein uL23 (98 aa).

The protein belongs to the universal ribosomal protein uL23 family. As to quaternary structure, part of the 50S ribosomal subunit. Contacts protein L29, and trigger factor when it is bound to the ribosome.

In terms of biological role, one of the early assembly proteins it binds 23S rRNA. One of the proteins that surrounds the polypeptide exit tunnel on the outside of the ribosome. Forms the main docking site for trigger factor binding to the ribosome. The protein is Large ribosomal subunit protein uL23 of Borrelia garinii subsp. bavariensis (strain ATCC BAA-2496 / DSM 23469 / PBi) (Borreliella bavariensis).